The following is a 382-amino-acid chain: Norsolorinic acid reductase B (382 aa).

Residue Asp-64 coordinates NADP(+). Catalysis depends on Tyr-69, which acts as the Proton donor. His-143 lines the substrate pocket. NADP(+) is bound by residues 173–174 (SD), Gln-199, 228–238 (GVLNQGRFRTE), and 302–310 (RKVDHLTGV).

It belongs to the aldo/keto reductase family. Aldo/keto reductase 2 subfamily.

The protein operates within mycotoxin biosynthesis; aflatoxin biosynthesis. In terms of biological role, norsolorinic acid reductase; part of the gene cluster that mediates the biosynthesis of aflatoxins, a group of polyketide-derived furanocoumarins, and part of the most toxic and carcinogenic compounds among the known mycotoxins. The four major aflatoxins produced by A.parasiticus are aflatoxin B1 (AFB1), aflatoxin B2 (AFB2), aflatoxin G1 (AFG1) and aflatoxin G2 (AFG2). Within the aflatoxin pathway, the norsolorinic acid reductase aflE may play a role in the conversion of norsolorinic acid (NOR) to averantin (AVN). The biosynthesis of aflatoxins begins with the norsolorinic acid synthase aflC that combines a hexanoyl starter unit produced by the fatty acid synthase aflA/aflB and 7 malonyl-CoA extender units to synthesize the precursor NOR. The second step is the conversion of NOR to averantin and requires the norsolorinic acid ketoreductase aflD, which catalyzes the dehydration of norsolorinic acid to form (1'S)-averantin. The norsolorinic acid reductases aflE and aflF may also play a role in the conversion of NOR to AVN. The cytochrome P450 monooxygenase aflG then catalyzes the hydroxylation of AVN to 5'hydroxyaverantin (HAVN). The next step is performed by the 5'-hydroxyaverantin dehydrogenase aflH that transforms HAVN to 5'-oxoaverantin (OAVN) which is further converted to averufin (AVF) by aflK that plays a dual role in the pathway, as a 5'-oxoaverantin cyclase that mediates conversion of 5'-oxoaverantin, as well as a versicolorin B synthase in a later step in the pathway. The averufin oxidase aflI catalyzes the conversion of AVF to versiconal hemiacetal acetate (VHA). VHA is then the substrate for the versiconal hemiacetal acetate esterase aflJ to yield versiconal (VAL). Versicolorin B synthase aflK then converts VAL to versicolorin B (VERB) by closing the bisfuran ring of aflatoxin which is required for DNA-binding, thus giving to aflatoxin its activity as a mutagen. Then, the activity of the versicolorin B desaturase aflL leads to versicolorin A (VERA). A branch point starts from VERB since it can also be converted to dihydrodemethylsterigmatocystin (DMDHST), probably also by aflL, VERA being a precursor for aflatoxins B1 and G1, and DMDHST for aflatoxins B2 and G2. Next, the versicolorin reductase aflM and the cytochrome P450 monooxygenase aflN are involved in conversion of VERA to demethylsterigmatocystin (DMST). AflX and aflY seem also involved in this step, through probable aflX-mediated epoxide ring-opening step following versicolorin A oxidation and aflY-mediated Baeyer-Villiger oxidation required for the formation of the xanthone ring. The methyltransferase aflO then leads to the modification of DMST to sterigmatocystin (ST), and of DMDHST to dihydrosterigmatocystin (DHST). Both ST and DHST are then substrates of the O-methyltransferase aflP to yield O-methylsterigmatocystin (OMST) and dihydro-O-methylsterigmatocystin (DHOMST), respectively. Finally OMST is converted to aflatoxins B1 and G1, and DHOMST to aflatoxins B2 and G2, via the action of several enzymes including O-methylsterigmatocystin oxidoreductase aflQ, the cytochrome P450 monooxygenase aflU, but also the NADH-dependent flavin oxidoreductase nadA which is specifically required for the synthesis of AFG1. The polypeptide is Norsolorinic acid reductase B (Aspergillus parasiticus (strain ATCC 56775 / NRRL 5862 / SRRC 143 / SU-1)).